A 689-amino-acid polypeptide reads, in one-letter code: Armadillo-like helical domain-containing protein 3 (689 aa).

A helical transmembrane segment spans residues 520-538 (IFQLALQVVNLFNMFITYG).

Belongs to the ARMH3 family.

The protein resides in the golgi apparatus membrane. Its subcellular location is the cytoplasm. Its function is as follows. May be involved in Golgi maintenance and protein secretion. The polypeptide is Armadillo-like helical domain-containing protein 3 (Danio rerio (Zebrafish)).